Consider the following 25-residue polypeptide: Small ribosomal subunit protein eS32 (25 aa).

The interval 1–25 is disordered; sequence MRAKWRKKRVRRLKRKRRKTRARSK.

The protein belongs to the eukaryotic ribosomal protein eS32 family. As to quaternary structure, component of the small ribosomal subunit.

This is Small ribosomal subunit protein eS32 (RPL41) from Quercus suber (Cork oak).